We begin with the raw amino-acid sequence, 489 residues long: MDDDLMLALRLQEEWNLQEAERDHAQESLSLVDASWELVDPTPDLQALFVQFNDQFFWGQLEAVEVKWSVRMTLCAGICSYEGKGGMCSIRLSEPLLKLRPRKDLVETLLHEMIHAYLFVTNNDKDREGHGPEFCKHMHRINSLTGANITVYHTFHDEVDEYRRHWWRCNGPCQHRPPYYGYVKRATNREPSAHDYWWAEHQKTCGGTYIKIKEPENYSKKGKGKAKLGKEPVLAAENKDKPNRGEAQLVIPFSGKGYVLGETSNLPSPGKLITSHAINKTQDLLNQNHSANAVRPNSKIKVKFEQNGSSKNSHLVSPAVSNSHQNVLSNYFPRVSFANQKAFRGVNGSPRISVTVGNIPKNSVSSSSQRRVSSSKISLRNSSKVTESASVMPSQDVSGSEDTFPNKRPRLEDKTVFDNFFIKKEQIKSSGNDPKYSTTTAQNSSSSSSQSKMVNCPVCQNEVLESQINEHLDWCLEGDSIKVKSEESL.

Met1 bears the N-acetylmethionine mark. Positions 45–212 constitute a SprT-like domain; sequence LQALFVQFND…KTCGGTYIKI (168 aa). His111 lines the Zn(2+) pocket. Residue Glu112 is part of the active site. Zn(2+) contacts are provided by His115 and His130. Lys230 carries the N6-acetyllysine modification. Positions 253-261 match the SHP-box motif; that stretch reads FSGKGYVLG. Position 268 is a phosphoserine (Ser268). Lys303 participates in a covalent cross-link: Glycyl lysine isopeptide (Lys-Gly) (interchain with G-Cter in SUMO2). The PIP-box motif lies at 325–332; sequence QNVLSNYF. Residue Lys341 forms a Glycyl lysine isopeptide (Lys-Gly) (interchain with G-Cter in SUMO2); alternate linkage. Residue Lys341 forms a Glycyl lysine isopeptide (Lys-Gly) (interchain with G-Cter in ubiquitin); alternate linkage. A disordered region spans residues 357–409; it reads GNIPKNSVSSSSQRRVSSSKISLRNSSKVTESASVMPSQDVSGSEDTFPNKRP. A Glycyl lysine isopeptide (Lys-Gly) (interchain with G-Cter in SUMO2) cross-link involves residue Lys361. Low complexity predominate over residues 363–383; sequence SVSSSSQRRVSSSKISLRNSS. Ser373 and Ser374 each carry phosphoserine; by CHEK1. Lys376 participates in a covalent cross-link: Glycyl lysine isopeptide (Lys-Gly) (interchain with G-Cter in SUMO2); alternate. Lys376 participates in a covalent cross-link: Glycyl lysine isopeptide (Lys-Gly) (interchain with G-Cter in ubiquitin); alternate. A Phosphoserine; by CHEK1 modification is found at Ser383. The segment covering 384–403 has biased composition (polar residues); that stretch reads KVTESASVMPSQDVSGSEDT. A Nuclear localization signal motif is present at residues 402–413; that stretch reads DTFPNKRPRLED. Residue Lys414 forms a Glycyl lysine isopeptide (Lys-Gly) (interchain with G-Cter in ubiquitin) linkage. Glycyl lysine isopeptide (Lys-Gly) (interchain with G-Cter in SUMO2) cross-links involve residues Lys423 and Lys424. The segment at 428–453 is disordered; the sequence is KSSGNDPKYSTTTAQNSSSSSSQSKM. Residue Lys435 forms a Glycyl lysine isopeptide (Lys-Gly) (interchain with G-Cter in ubiquitin) linkage. Residues 437 to 451 are compositionally biased toward low complexity; the sequence is STTTAQNSSSSSSQS. The segment at 453 to 480 adopts a UBZ4-type zinc-finger fold; that stretch reads MVNCPVCQNEVLESQINEHLDWCLEGDS. Positions 456, 459, 471, and 475 each coordinate Zn(2+). Lys484 participates in a covalent cross-link: Glycyl lysine isopeptide (Lys-Gly) (interchain with G-Cter in SUMO2).

It belongs to the Spartan family. As to quaternary structure, homodimer. Interacts (VIA PIP-box) with PCNA (when ubiquitinated). Interacts (via its SHP-box) with VCP/p97. Interacts with RAD18. Interacts with KCTD13 and POLD3. Zn(2+) is required as a cofactor. Post-translationally, autocatalytically cleaved in response to double-stranded DNA-binding: autocatalytic cleavage takes place in trans and leads to inactivation. Monoubiquitinated; monoubiquitination promotes exclusion from chromatin. Deubiquitinated by VCPIP1: deubiquitination is required for subsequent acetylation and recruitment to chromatin and DNA damage sites. In terms of processing, acetylated following deubiquitination by VCPIP1, leading to recruitment to chromatin and DNA damage sites. Post-translationally, phosphorylation by CHEK1 promotes recruitment to chromatin.

The protein localises to the nucleus. It localises to the chromosome. With respect to regulation, DNA-binding activates the protease activity: single-stranded DNA-binding specifically activates ability to cleave covalent DNA-protein cross-links (DPCs). In contrast, double-stranded DNA-binding specifically activates autocatalytic cleavage, and subsequent inactivation. In terms of biological role, DNA-dependent metalloendopeptidase that mediates the proteolytic cleavage of covalent DNA-protein cross-links (DPCs) during DNA synthesis, thereby playing a key role in maintaining genomic integrity. DPCs are highly toxic DNA lesions that interfere with essential chromatin transactions, such as replication and transcription, and which are induced by reactive agents, such as UV light or formaldehyde. Associates with the DNA replication machinery and specifically removes DPCs during DNA synthesis. Catalyzes proteolytic cleavage of the HMCES DNA-protein cross-link following unfolding by the BRIP1/FANCJ helicase. Acts as a pleiotropic protease for DNA-binding proteins cross-linked with DNA, such as TOP1, TOP2A, histones H3 and H4. Mediates degradation of DPCs that are not ubiquitinated, while it is not able to degrade ubiquitinated DPCs. SPRTN activation requires polymerase collision with DPCs followed by helicase bypass of DPCs. Involved in recruitment of VCP/p97 to sites of DNA damage. Also acts as an activator of CHEK1 during normal DNA replication by mediating proteolytic cleavage of CHEK1, thereby promoting CHEK1 removal from chromatin and subsequent activation. Does not activate CHEK1 in response to DNA damage. May also act as a 'reader' of ubiquitinated PCNA: recruited to sites of UV damage and interacts with ubiquitinated PCNA and RAD18, the E3 ubiquitin ligase that monoubiquitinates PCNA. Facilitates chromatin association of RAD18 and is required for efficient PCNA monoubiquitination, promoting a feed-forward loop to enhance PCNA ubiquitination and translesion DNA synthesis. This Homo sapiens (Human) protein is DNA-dependent metalloprotease SPRTN.